The chain runs to 301 residues: GTPase IMAP family member 3 (301 aa).

Residues 1–279 (METLQNVVTG…GKKLEVLHSD (279 aa)) lie on the Cytoplasmic side of the membrane. An AIG1-type G domain is found at 20 to 223 (SRPLRILLVG…HSNDLFLHAE (204 aa)). GTP is bound by residues 29 to 37 (GKSGCGKSA), Ser50, 147 to 149 (RKE), and Asn184. Residues 263 to 301 (VLKVLPIGKKLEVLHSDFCWYLVLAILIFFVFFFLLFYV) form a required for targeting to the endoplasmic reticulum region. Residues 280 to 300 (FCWYLVLAILIFFVFFFLLFY) traverse the membrane as a helical; Anchor for type IV membrane protein segment. Position 301 (Val301) is a topological domain, lumenal.

The protein belongs to the TRAFAC class TrmE-Era-EngA-EngB-Septin-like GTPase superfamily. AIG1/Toc34/Toc159-like paraseptin GTPase family. IAN subfamily. In terms of assembly, interacts with BAD, BAK1, BAX, BCL2, BCL2L1/Bcl-xL and BCL2L11/BimEL. The interaction with BAX is increased, when cells initiate apoptosis upon IL2 withdrawal. Expressed in thymus (in thymocytes), spleen (in splenocytes), lymph node and, at lower levels, in lung. Highly expressed in T lymphocytes.

The protein localises to the endoplasmic reticulum membrane. During thymocyte development, may support the positive selection of CD4 and CD8 T cells. May play a role in mitochondrial DNA segregation in hematopoietic tissues. Binds GTP. This is GTPase IMAP family member 3 (Gimap3) from Mus musculus (Mouse).